The following is a 335-amino-acid chain: Capsular polysaccharide phosphotransferase WcwK (335 aa).

Belongs to the stealth family.

In Streptococcus pneumoniae, this protein is Capsular polysaccharide phosphotransferase WcwK (wcwK).